Consider the following 415-residue polypeptide: 3-oxoacyl-[acyl-carrier-protein] synthase 2 (415 aa).

A Ketosynthase family 3 (KS3) domain is found at 3–412; that stretch reads KRRVVVTGMG…GTNGSLVFKK (410 aa). Active-site for beta-ketoacyl synthase activity residues include Cys164, His304, and His342.

Belongs to the thiolase-like superfamily. Beta-ketoacyl-ACP synthases family. As to quaternary structure, homodimer.

The catalysed reaction is a fatty acyl-[ACP] + malonyl-[ACP] + H(+) = a 3-oxoacyl-[ACP] + holo-[ACP] + CO2. It carries out the reaction (9Z)-hexadecenoyl-[ACP] + malonyl-[ACP] + H(+) = 3-oxo-(11Z)-octadecenoyl-[ACP] + holo-[ACP] + CO2. It participates in lipid metabolism; fatty acid biosynthesis. In terms of biological role, involved in the type II fatty acid elongation cycle. Catalyzes the elongation of a wide range of acyl-ACP by the addition of two carbons from malonyl-ACP to an acyl acceptor. Can efficiently catalyze the conversion of palmitoleoyl-ACP (cis-hexadec-9-enoyl-ACP) to cis-vaccenoyl-ACP (cis-octadec-11-enoyl-ACP), an essential step in the thermal regulation of fatty acid composition. In Vibrio harveyi (Beneckea harveyi), this protein is 3-oxoacyl-[acyl-carrier-protein] synthase 2 (fabF).